We begin with the raw amino-acid sequence, 239 residues long: Vesicle-associated protein 1-2 (239 aa).

Position 1 is an N-acetylmethionine (Met1). Topologically, residues 1-215 are cytoplasmic; the sequence is MSNELLTIDP…RRESKRSKSG (215 aa). Ser2 bears the N-acetylserine; in Vesicle-associated protein 1-2, N-terminally processed mark. In terms of domain architecture, MSP spans 5–125; the sequence is LLTIDPVDLQ…EETKLRVVYV (121 aa). Positions 123 to 174 are disordered; that stretch reads VYVAPPRPPSPVREGSEEGSSPRASVSDNGNASDFTAAPRFSADRVDAQDNS. Ser132 bears the Phosphoserine mark. Residues 140–156 are compositionally biased toward polar residues; that stretch reads EGSSPRASVSDNGNASD. Ser164 is subject to Phosphoserine. Positions 169–215 form a coiled coil; sequence DAQDNSSEARALVTKLTEEKNSAVQLNNRLQQELDQLRRESKRSKSG. A helical; Anchor for type IV membrane protein membrane pass occupies residues 216-236; the sequence is GIPFMYVLLVGLIGLILGYIM.

This sequence belongs to the VAMP-associated protein (VAP) (TC 9.B.17) family. Interacts with ORP3A. Binds to VLG at the endomembrane system.

Its subcellular location is the endoplasmic reticulum membrane. Its function is as follows. Vesicle-associated protein that binds the oxysterol-binding protein ORP3A and allows its targeting to the ER. This is Vesicle-associated protein 1-2 from Arabidopsis thaliana (Mouse-ear cress).